Consider the following 454-residue polypeptide: tRNA modification GTPase MnmE (454 aa).

Residues arginine 23, glutamate 80, and lysine 120 each contribute to the (6S)-5-formyl-5,6,7,8-tetrahydrofolate site. One can recognise a TrmE-type G domain in the interval 216–377 (GMKVVIAGRP…LRNHLKQSMG (162 aa)). Asparagine 226 is a K(+) binding site. GTP-binding positions include 226–231 (NAGKSS), 245–251 (TDIAGTT), 270–273 (DTAG), 335–338 (NKAD), and 358–360 (SAR). Serine 230 is a Mg(2+) binding site. K(+)-binding residues include threonine 245, isoleucine 247, and threonine 250. Threonine 251 contributes to the Mg(2+) binding site. Lysine 454 contacts (6S)-5-formyl-5,6,7,8-tetrahydrofolate.

It belongs to the TRAFAC class TrmE-Era-EngA-EngB-Septin-like GTPase superfamily. TrmE GTPase family. Homodimer. Heterotetramer of two MnmE and two MnmG subunits. It depends on K(+) as a cofactor.

Its subcellular location is the cytoplasm. Its function is as follows. Exhibits a very high intrinsic GTPase hydrolysis rate. Involved in the addition of a carboxymethylaminomethyl (cmnm) group at the wobble position (U34) of certain tRNAs, forming tRNA-cmnm(5)s(2)U34. This is tRNA modification GTPase MnmE from Klebsiella pneumoniae subsp. pneumoniae (strain ATCC 700721 / MGH 78578).